We begin with the raw amino-acid sequence, 353 residues long: Protein MGF 360-10L (353 aa).

The stretch at 57–89 (DLNTALMLATKENNYQLIKLFTEWGADINYGLI) is one ANK repeat. The N-linked (GlcNAc...) asparagine; by host glycan is linked to N172. The next 2 helical transmembrane spans lie at 206-228 (LNTW…NLYE) and 249-271 (NFLT…IASI). A glycan (N-linked (GlcNAc...) asparagine; by host) is linked at N342.

The protein belongs to the asfivirus MGF 360 family.

Its subcellular location is the host membrane. Plays a role in virus cell tropism, and may be required for efficient virus replication in macrophages. The protein is Protein MGF 360-10L of African swine fever virus (isolate Warthog/Namibia/Wart80/1980) (ASFV).